Reading from the N-terminus, the 437-residue chain is Phosphoribosylamine--glycine ligase (437 aa).

Positions 109 to 316 constitute an ATP-grasp domain; the sequence is KDFLARHGIP…LLDLIEAALN (208 aa). 135 to 196 serves as a coordination point for ATP; it reads VRQQGAPIVI…EEYLDGEEAS (62 aa). Residues E286 and N288 each coordinate Mg(2+).

It belongs to the GARS family. Requires Mg(2+) as cofactor. Mn(2+) serves as cofactor.

It catalyses the reaction 5-phospho-beta-D-ribosylamine + glycine + ATP = N(1)-(5-phospho-beta-D-ribosyl)glycinamide + ADP + phosphate + H(+). Its pathway is purine metabolism; IMP biosynthesis via de novo pathway; N(1)-(5-phospho-D-ribosyl)glycinamide from 5-phospho-alpha-D-ribose 1-diphosphate: step 2/2. This Xylella fastidiosa (strain 9a5c) protein is Phosphoribosylamine--glycine ligase.